Reading from the N-terminus, the 621-residue chain is SH2B adapter protein 2 (621 aa).

Residue tyrosine 47 is modified to Phosphotyrosine. Serine 130 is modified (phosphoserine). Positions 144–165 are disordered; that stretch reads RASPEPEGGATPKTTEPVSEPR. The region spanning 186–299 is the PH domain; sequence DIQREGALRF…WVADIQGCVD (114 aa). Serine 303 is modified (phosphoserine). The SH2 domain occupies 409 to 507; the sequence is WFHGTLSRVK…SADITLRSYV (99 aa). Disordered regions lie at residues 507–528 and 548–609; these read VRAQ…PVPA and PPTS…ATLG. A compositionally biased stretch (low complexity) spans 552–570; sequence PSNGAGASSSSGSSSSATS. Serine 597 is subject to Phosphoserine. Tyrosine 618 carries the post-translational modification Phosphotyrosine.

It belongs to the SH2B adapter family. Homodimer. Interacts with KIT/c-KIT, SHC1, EPOR, PDGFR, VAV1 and VAV3. Interacts (via N-terminal region) with SHC1. Interacts (via the phosphorylated C-terminus) with GRB2. Interacts (via its SH2 domain) with EPOR, INSR and KIT. Interacts with GRB2 after B-cell antigen receptor stimulation. Interacts (via PH domain) with VAV3. Interacts with NTRK1, NTRK2 and NTRK3 (phosphorylated); after stimulation of the receptor by its extracellular ligand and subsequent autophosphorylation of the receptor. Binds INSR, GRB2, ASB6 and CAP. Insulin stimulation leads to dissociation of CAP. Binds CBS only when SH2B2/APS has become phosphorylated. INSR binding does not depend on the phosphorylation of SH2B2/APS. Phosphorylated on a tyrosine residue by NTRK1, NTRK2, NTRK3 and INSR after stimulation of the receptor by its extracellular ligand. Tyrosine phosphorylated by JAK2, KIT and other kinases activated by B-cell receptor in response to stimulation with cytokines, IL3, IL5, PDGF, IGF1, IGF2, CSF2/GM-CSF and cross-linking of the B-cell receptor complex. Detected in embryonic brain, spinal cord and cortical neurons.

The protein resides in the cytoplasm. It localises to the membrane. Its function is as follows. Adapter protein for several members of the tyrosine kinase receptor family. Involved in multiple signaling pathways. Binds to EPOR and suppresses EPO-induced STAT5 activation, possibly through a masking effect on STAT5 docking sites in EPOR. Suppresses PDGF-induced mitogenesis. Involved in stimulation of glucose uptake by insulin. Involved in coupling from immunoreceptor to Ras signaling. Acts as a negative regulator of cytokine signaling in collaboration with CBL. Induces cytoskeletal reorganization and neurite outgrowth in cultured neurons. The polypeptide is SH2B adapter protein 2 (Sh2b2) (Rattus norvegicus (Rat)).